We begin with the raw amino-acid sequence, 362 residues long: MKGLILVGGYGTRLRPLTLTLPKPLVEFGNRPMILHQIEALAAAGVTDIVLAVNYRPEVMVSTLKKYEEEYGVSITFSVEEEPLGTAGPLKLAEEVLKKDDSPFFVLNSDVICDYPFKELADFHKAHGAAGTIVATKVDEPSKYGVIVHDRDTPNLIDRFVEKPVEFVGNRINAGLYILNPSVIDLIEMRPTSIEKETFPILVEQKQLYSFDLEGYWMDVGQPKDFLSGTCLYLTSLSKKHPEKLCKEKYVHGGNVLIDPTAKIHPSALIGPNVTIGPNVVVGEGARIQRSVLLANSQVKDHAWVKSTIVGWNSRIGKWARTEGVTVLGDDVEVKNEIYVNGAKVLPHKSISSNVEKESIIM.

This sequence belongs to the transferase hexapeptide repeat family.

Its subcellular location is the cytoplasm. It catalyses the reaction alpha-D-mannose 1-phosphate + GTP + H(+) = GDP-alpha-D-mannose + diphosphate. Its pathway is nucleotide-sugar biosynthesis; GDP-alpha-D-mannose biosynthesis; GDP-alpha-D-mannose from alpha-D-mannose 1-phosphate (GTP route): step 1/1. In terms of biological role, involved in cell wall synthesis where it is required for glycosylation. Involved in cell cycle progression through cell-size checkpoint. The protein is Mannose-1-phosphate guanyltransferase (MPG1) of Candida albicans (strain SC5314 / ATCC MYA-2876) (Yeast).